The following is a 114-amino-acid chain: Aspartate 1-decarboxylase (114 aa).

Residue S25 is the Schiff-base intermediate with substrate; via pyruvic acid of the active site. S25 is modified (pyruvic acid (Ser)). T57 is a substrate binding site. Y58 serves as the catalytic Proton donor. A substrate-binding site is contributed by 71–73 (GAA).

This sequence belongs to the PanD family. As to quaternary structure, heterooctamer of four alpha and four beta subunits. Requires pyruvate as cofactor. In terms of processing, is synthesized initially as an inactive proenzyme, which is activated by self-cleavage at a specific serine bond to produce a beta-subunit with a hydroxyl group at its C-terminus and an alpha-subunit with a pyruvoyl group at its N-terminus.

Its subcellular location is the cytoplasm. The catalysed reaction is L-aspartate + H(+) = beta-alanine + CO2. It participates in cofactor biosynthesis; (R)-pantothenate biosynthesis; beta-alanine from L-aspartate: step 1/1. Its function is as follows. Catalyzes the pyruvoyl-dependent decarboxylation of aspartate to produce beta-alanine. The protein is Aspartate 1-decarboxylase of Campylobacter hominis (strain ATCC BAA-381 / DSM 21671 / CCUG 45161 / LMG 19568 / NCTC 13146 / CH001A).